The following is a 114-amino-acid chain: Large ribosomal subunit protein bL19 (114 aa).

This sequence belongs to the bacterial ribosomal protein bL19 family.

Functionally, this protein is located at the 30S-50S ribosomal subunit interface and may play a role in the structure and function of the aminoacyl-tRNA binding site. The protein is Large ribosomal subunit protein bL19 of Clostridium botulinum (strain Loch Maree / Type A3).